A 195-amino-acid chain; its full sequence is MRLILFGGPGSGKGTQAAILTTLLGIPHISTGDILRAERAAGTLLGQQAQSYMDRGELVPDQVIVDMVANRLQQPDTAAGWLLDGFPRNGAQAAVFEEMLKSIHQDYDYLLFLDVPAAILQERALNRAKQAVNGQQRSDDTPETILKRLQVYERETLPMIQQYMSHPKFVPIDGTRTIEEVTAAIQARIGEVNRV.

An ATP-binding site is contributed by Gly10–Thr15. Residues Ser30 to Val59 form an NMP region. Residues Thr31, Arg36, Glu57–Val59, Gly85–Arg88, and Gln92 contribute to the AMP site. An LID region spans residues Asn126–Asp140. Arg127 provides a ligand contact to ATP. AMP contacts are provided by Arg137 and Arg148. Position 176 (Arg176) interacts with ATP.

This sequence belongs to the adenylate kinase family. In terms of assembly, monomer.

The protein resides in the cytoplasm. The enzyme catalyses AMP + ATP = 2 ADP. The protein operates within purine metabolism; AMP biosynthesis via salvage pathway; AMP from ADP: step 1/1. Functionally, catalyzes the reversible transfer of the terminal phosphate group between ATP and AMP. Plays an important role in cellular energy homeostasis and in adenine nucleotide metabolism. In Thermosynechococcus vestitus (strain NIES-2133 / IAM M-273 / BP-1), this protein is Adenylate kinase.